Here is a 268-residue protein sequence, read N- to C-terminus: F-actin-capping protein subunit alpha (268 aa).

Position 2 is an N-acetylserine (Ser2). Ser17 is modified (phosphoserine).

It belongs to the F-actin-capping protein alpha subunit family. Component of the F-actin capping complex, composed of a heterodimer of an alpha and a beta subunit. Interacts with BSP1 (via C-terminus); leading to recruitment of the F-actin capping complex to actin cortical patches and the acomyosin contractile ring.

The protein resides in the cytoplasm. It is found in the cytoskeleton. It localises to the actin patch. In terms of biological role, F-actin-capping proteins bind in a Ca(2+)-independent manner to the fast growing ends of actin filaments (barbed end) thereby blocking the exchange of subunits at these ends. Unlike other capping proteins (such as gelsolin and severin), these proteins do not sever actin filaments. This Saccharomyces cerevisiae (strain ATCC 204508 / S288c) (Baker's yeast) protein is F-actin-capping protein subunit alpha (CAP1).